The primary structure comprises 446 residues: Tol-Pal system protein TolB (446 aa).

An N-terminal signal peptide occupies residues M1–A19.

The protein belongs to the TolB family. The Tol-Pal system is composed of five core proteins: the inner membrane proteins TolA, TolQ and TolR, the periplasmic protein TolB and the outer membrane protein Pal. They form a network linking the inner and outer membranes and the peptidoglycan layer.

It localises to the periplasm. Functionally, part of the Tol-Pal system, which plays a role in outer membrane invagination during cell division and is important for maintaining outer membrane integrity. In Pelagibacter ubique (strain HTCC1062), this protein is Tol-Pal system protein TolB.